Here is a 330-residue protein sequence, read N- to C-terminus: Biotin synthase 2 (330 aa).

The Radical SAM core domain maps to 48-278 (MCGDGFDMCS…QAAIRLAGGR (231 aa)). Positions 66, 70, and 73 each coordinate [4Fe-4S] cluster. S111, C143, C203, and R273 together coordinate [2Fe-2S] cluster.

Belongs to the radical SAM superfamily. Biotin synthase family. Homodimer. Requires [4Fe-4S] cluster as cofactor. It depends on [2Fe-2S] cluster as a cofactor.

The enzyme catalyses (4R,5S)-dethiobiotin + (sulfur carrier)-SH + 2 reduced [2Fe-2S]-[ferredoxin] + 2 S-adenosyl-L-methionine = (sulfur carrier)-H + biotin + 2 5'-deoxyadenosine + 2 L-methionine + 2 oxidized [2Fe-2S]-[ferredoxin]. It functions in the pathway cofactor biosynthesis; biotin biosynthesis; biotin from 7,8-diaminononanoate: step 2/2. Functionally, catalyzes the conversion of dethiobiotin (DTB) to biotin by the insertion of a sulfur atom into dethiobiotin via a radical-based mechanism. The protein is Biotin synthase 2 of Corynebacterium diphtheriae (strain ATCC 700971 / NCTC 13129 / Biotype gravis).